We begin with the raw amino-acid sequence, 163 residues long: ATP synthase subunit b, sodium ion specific (163 aa).

Residues 9-29 traverse the membrane as a helical segment; the sequence is VSIDINMFWQIINFLILMFFF.

This sequence belongs to the ATPase B chain family. In terms of assembly, F-type ATPases have 2 components, F(1) - the catalytic core - and F(0) - the membrane proton channel. F(1) has five subunits: alpha(3), beta(3), gamma(1), delta(1), epsilon(1). F(0) has three main subunits: a(1), b(2) and c(10-14). The alpha and beta chains form an alternating ring which encloses part of the gamma chain. F(1) is attached to F(0) by a central stalk formed by the gamma and epsilon chains, while a peripheral stalk is formed by the delta and b chains.

It is found in the cell inner membrane. Functionally, f(1)F(0) ATP synthase produces ATP from ADP in the presence of a proton or sodium gradient. F-type ATPases consist of two structural domains, F(1) containing the extramembraneous catalytic core and F(0) containing the membrane proton channel, linked together by a central stalk and a peripheral stalk. During catalysis, ATP synthesis in the catalytic domain of F(1) is coupled via a rotary mechanism of the central stalk subunits to proton translocation. In terms of biological role, component of the F(0) channel, it forms part of the peripheral stalk, linking F(1) to F(0). In Ilyobacter tartaricus, this protein is ATP synthase subunit b, sodium ion specific (atpF).